Consider the following 98-residue polypeptide: Integration host factor subunit alpha (98 aa).

The segment covering 53–69 has biased composition (basic and acidic residues); it reads DLREKNERPGRNPKTGE. The disordered stretch occupies residues 53-72; sequence DLREKNERPGRNPKTGEDIP.

This sequence belongs to the bacterial histone-like protein family. In terms of assembly, heterodimer of an alpha and a beta chain.

In terms of biological role, this protein is one of the two subunits of integration host factor, a specific DNA-binding protein that functions in genetic recombination as well as in transcriptional and translational control. This chain is Integration host factor subunit alpha, found in Vibrio atlanticus (strain LGP32) (Vibrio splendidus (strain Mel32)).